We begin with the raw amino-acid sequence, 466 residues long: 3-isopropylmalate dehydratase large subunit (466 aa).

Residues Cys347, Cys407, and Cys410 each contribute to the [4Fe-4S] cluster site.

Belongs to the aconitase/IPM isomerase family. LeuC type 1 subfamily. In terms of assembly, heterodimer of LeuC and LeuD. [4Fe-4S] cluster serves as cofactor.

The catalysed reaction is (2R,3S)-3-isopropylmalate = (2S)-2-isopropylmalate. Its pathway is amino-acid biosynthesis; L-leucine biosynthesis; L-leucine from 3-methyl-2-oxobutanoate: step 2/4. In terms of biological role, catalyzes the isomerization between 2-isopropylmalate and 3-isopropylmalate, via the formation of 2-isopropylmaleate. This is 3-isopropylmalate dehydratase large subunit from Salmonella paratyphi A (strain ATCC 9150 / SARB42).